The primary structure comprises 365 residues: Peptide chain release factor 2 (365 aa).

Residue Q252 is modified to N5-methylglutamine.

It belongs to the prokaryotic/mitochondrial release factor family. Methylated by PrmC. Methylation increases the termination efficiency of RF2.

Its subcellular location is the cytoplasm. Peptide chain release factor 2 directs the termination of translation in response to the peptide chain termination codons UGA and UAA. This Pasteurella multocida (strain Pm70) protein is Peptide chain release factor 2.